A 564-amino-acid polypeptide reads, in one-letter code: Histone acetyltransferase rtt109 (564 aa).

Residues F138, 157-159 (HVL), and W167 contribute to the acetyl-CoA site. Catalysis depends on D261, which acts as the Proton donor/acceptor. At K263 the chain carries N6-acetyllysine; by autocatalysis. 2 disordered regions span residues 355-420 (YDKV…NAFY) and 506-549 (RKKD…ESPG). The segment covering 366 to 377 (AVSVSTDSQSSD) has biased composition (low complexity). 2 stretches are compositionally biased toward polar residues: residues 394 to 417 (DPSTQTGSLSSETHPKVQPNTDQN) and 512 to 521 (SQATTATSAQ). Residues 529-544 (GTVSTAVTAEASTTGT) are compositionally biased toward low complexity.

This sequence belongs to the RTT109 family.

It localises to the nucleus. The protein localises to the vacuole. It catalyses the reaction L-lysyl-[protein] + acetyl-CoA = N(6)-acetyl-L-lysyl-[protein] + CoA + H(+). The catalysed reaction is L-lysyl-[histone] + acetyl-CoA = N(6)-acetyl-L-lysyl-[histone] + CoA + H(+). In terms of biological role, histone chaperone-dependent acetylase that modifies 'Lys-56' of histone H3 (H3K56ac). Histone H3 'Lys-56' acetylation may be required for S-phase-linked DNA damage tolerance. Also acetylates 'Lys-9' of histone H3 (H3K9ac). Autoacetylates. The polypeptide is Histone acetyltransferase rtt109 (Aspergillus flavus).